We begin with the raw amino-acid sequence, 191 residues long: dCTP deaminase, dUMP-forming (191 aa).

DCTP-binding positions include lysine 101–arginine 106, aspartate 119, threonine 127–glutamate 129, glutamine 148, tyrosine 162, and glutamine 174. Glutamate 129 serves as the catalytic Proton donor/acceptor.

Belongs to the dCTP deaminase family. Homotrimer.

It catalyses the reaction dCTP + 2 H2O = dUMP + NH4(+) + diphosphate. It functions in the pathway pyrimidine metabolism; dUMP biosynthesis; dUMP from dCTP: step 1/1. In terms of biological role, bifunctional enzyme that catalyzes both the deamination of dCTP to dUTP and the hydrolysis of dUTP to dUMP without releasing the toxic dUTP intermediate. The protein is dCTP deaminase, dUMP-forming of Streptomyces avermitilis (strain ATCC 31267 / DSM 46492 / JCM 5070 / NBRC 14893 / NCIMB 12804 / NRRL 8165 / MA-4680).